Consider the following 196-residue polypeptide: Blue copper protein (196 aa).

The first 22 residues, 1–22 (MAGVFKTVTFLVLVFAAVVVFA), serve as a signal peptide directing secretion. Positions 23 to 125 (EDYDVGDDTE…GQKLSITVVA (103 aa)) constitute a Phytocyanin domain. A Cu cation-binding site is contributed by His66. Cys79 and Cys113 form a disulfide bridge. Asn98 carries N-linked (GlcNAc...) asparagine glycosylation. Cu cation is bound by residues Cys107, His112, and Gln117. The interval 133–173 (TPGAGATPAPGSTPSTGGTTPPTAGGTTTPSGSSGTTTPAG) is disordered. Residues 135 to 173 (GAGATPAPGSTPSTGGTTPPTAGGTTTPSGSSGTTTPAG) are compositionally biased toward low complexity. Asn174 carries GPI-anchor amidated asparagine lipidation. A propeptide spans 175–196 (AASSLGGATFLVAFVSAVVALF) (removed in mature form).

It localises to the cell membrane. Its function is as follows. Probably acts as an electron carrier. This Arabidopsis thaliana (Mouse-ear cress) protein is Blue copper protein (BCB).